The following is a 205-amino-acid chain: Large ribosomal subunit protein uL4 (205 aa).

The protein belongs to the universal ribosomal protein uL4 family. In terms of assembly, part of the 50S ribosomal subunit.

Functionally, one of the primary rRNA binding proteins, this protein initially binds near the 5'-end of the 23S rRNA. It is important during the early stages of 50S assembly. It makes multiple contacts with different domains of the 23S rRNA in the assembled 50S subunit and ribosome. In terms of biological role, forms part of the polypeptide exit tunnel. In Thermus thermophilus (strain ATCC BAA-163 / DSM 7039 / HB27), this protein is Large ribosomal subunit protein uL4.